We begin with the raw amino-acid sequence, 84 residues long: Beta-mammal toxin Cn2 (84 aa).

A signal peptide spans 1–16 (LLIITACLALIGTVWA). Positions 17-82 (KEGYLVDKNT…VWPLPNKRCS (66 aa)) constitute an LCN-type CS-alpha/beta domain. Intrachain disulfides connect cysteine 28/cysteine 81, cysteine 32/cysteine 57, cysteine 41/cysteine 62, and cysteine 45/cysteine 64. A Serine amide modification is found at serine 82.

Belongs to the long (4 C-C) scorpion toxin superfamily. Sodium channel inhibitor family. Beta subfamily. Expressed by the venom gland.

It is found in the secreted. Its function is as follows. Mammal beta-toxins bind voltage-independently at site-4 of sodium channels (Nav) and shift the activation voltage to more negative potentials. This toxin is active against mammals. The polypeptide is Beta-mammal toxin Cn2 (Centruroides noxius (Mexican scorpion)).